The chain runs to 144 residues: MGKIPIKRILAIDYGKKRTGLAKTDPFCSFAQPVGTFPPEKIITIIKSFLQENSVEKIIVGYPLNSDGTKNPMTGIIDGFIEELSAAFPDIPVEPIDEHGSSKQAGKVLIESGLSRKKRQRKGRLDSAAACLLLQHYLENTGNA.

This sequence belongs to the YqgF nuclease family.

It localises to the cytoplasm. Could be a nuclease involved in processing of the 5'-end of pre-16S rRNA. In Chlorobium phaeobacteroides (strain BS1), this protein is Putative pre-16S rRNA nuclease.